We begin with the raw amino-acid sequence, 225 residues long: C-reactive protein (225 aa).

Residues 1–18 (MLVVFLCLLSVTLEATEG) form the signal peptide. One can recognise a Pentraxin (PTX) domain in the interval 23 to 225 (SGKVLQFKTA…TGNVLVATDN (203 aa)). Cysteine 54 and cysteine 116 are oxidised to a cystine. The Ca(2+) site is built by aspartate 78, aspartate 157, proline 158, aspartate 159, and glutamine 169.

This sequence belongs to the pentraxin family. As to quaternary structure, homotrimer. Ca(2+) is required as a cofactor.

It localises to the secreted. In terms of biological role, displays several functions associated with host defense: it promotes agglutination, bacterial capsular swelling, phagocytosis, and complement fixation through its calcium-dependent binding to phosphorylcholine. In Danio rerio (Zebrafish), this protein is C-reactive protein.